The primary structure comprises 325 residues: NADH-quinone oxidoreductase subunit H (325 aa).

8 helical membrane passes run 5–25, 75–95, 117–137, 157–177, 190–210, 240–260, 268–288, and 305–325; these read LIII…AAAY, FVYW…FVLI, VGVV…VLAG, ISYE…TGTL, WLIW…FAET, FFLG…TLFF, DIPI…FMWV, and WKVL…FTLV.

Belongs to the complex I subunit 1 family. NDH-1 is composed of 14 different subunits. Subunits NuoA, H, J, K, L, M, N constitute the membrane sector of the complex.

Its subcellular location is the cell inner membrane. It catalyses the reaction a quinone + NADH + 5 H(+)(in) = a quinol + NAD(+) + 4 H(+)(out). In terms of biological role, NDH-1 shuttles electrons from NADH, via FMN and iron-sulfur (Fe-S) centers, to quinones in the respiratory chain. The immediate electron acceptor for the enzyme in this species is believed to be ubiquinone. Couples the redox reaction to proton translocation (for every two electrons transferred, four hydrogen ions are translocated across the cytoplasmic membrane), and thus conserves the redox energy in a proton gradient. This subunit may bind ubiquinone. In Protochlamydia amoebophila (strain UWE25), this protein is NADH-quinone oxidoreductase subunit H.